The sequence spans 722 residues: Pre-B-cell leukemia transcription factor-interacting protein 1 (722 aa).

The segment covering 1–10 (MASCPDSDNS) has biased composition (polar residues). The interval 1 to 180 (MASCPDSDNS…TAAVDGEDQA (180 aa)) is disordered. Residues 88–97 (DDGHGTKRPG) show a composition bias toward basic and acidic residues. Phosphoserine occurs at positions 133, 144, 145, and 146. At Thr-150 the chain carries Phosphothreonine. Ser-166 is modified (phosphoserine). Coiled coils occupy residues 266–346 (LLLD…RGVD) and 373–401 (DTSLLEQHKQLEAEAKALRQELQKQWQLL). A compositionally biased stretch (polar residues) spans 442–453 (QGINTGRSSNDS). Disordered stretches follow at residues 442–562 (QGIN…SPDS) and 691–722 (RRSKKKEKQPWNHRAVGPREEHSRHPHHYHQG). Composition is skewed to basic and acidic residues over residues 465 to 536 (HPRE…DPKV) and 546 to 559 (SGERQKHSWGKDNS). Positions 482–502 (QKAEHWKLKKEESGQDRKKSW) match the Nuclear localization signal motif. Ser-559 carries the post-translational modification Phosphoserine. The Nuclear localization signal motif lies at 686 to 711 (DKALKRRSKKKEKQPWNHRAVGPREE).

In terms of assembly, interacts with ESR1, PBX1, PBX2 and PBX3. Interacts with TEX11.

The protein resides in the cytoplasm. It localises to the cytoskeleton. Its subcellular location is the nucleus. Regulator of pre-B-cell leukemia transcription factors (BPXs) function. Inhibits the binding of PBX1-HOX complex to DNA and blocks the transcriptional activity of E2A-PBX1. Tethers estrogen receptor-alpha (ESR1) to microtubules and allows them to influence estrogen receptors-alpha signaling. The protein is Pre-B-cell leukemia transcription factor-interacting protein 1 (Pbxip1) of Rattus norvegicus (Rat).